Here is a 183-residue protein sequence, read N- to C-terminus: Probable GTP-binding protein EngB (183 aa).

Residues 18–183 (DQNEIVFWGR…LSDLVEHFEL (166 aa)) form the EngB-type G domain. GTP contacts are provided by residues 26–33 (GRSNVGKS), 52–56 (GRTRL), 70–73 (DLPG), 137–140 (TKID), and 166–168 (VSS). Positions 33 and 54 each coordinate Mg(2+).

It belongs to the TRAFAC class TrmE-Era-EngA-EngB-Septin-like GTPase superfamily. EngB GTPase family. The cofactor is Mg(2+).

In terms of biological role, necessary for normal cell division and for the maintenance of normal septation. In Metamycoplasma arthritidis (strain 158L3-1) (Mycoplasma arthritidis), this protein is Probable GTP-binding protein EngB.